Consider the following 191-residue polypeptide: Elongation factor P (191 aa).

Lys34 is subject to N6-(3,6-diaminohexanoyl)-5-hydroxylysine.

This sequence belongs to the elongation factor P family. In terms of processing, may be beta-lysylated on the epsilon-amino group of Lys-34 by the combined action of EpmA and EpmB, and then hydroxylated on the C5 position of the same residue by EpmC (if this protein is present). Lysylation is critical for the stimulatory effect of EF-P on peptide-bond formation. The lysylation moiety may extend toward the peptidyltransferase center and stabilize the terminal 3-CCA end of the tRNA. Hydroxylation of the C5 position on Lys-34 may allow additional potential stabilizing hydrogen-bond interactions with the P-tRNA.

It is found in the cytoplasm. It functions in the pathway protein biosynthesis; polypeptide chain elongation. Functionally, involved in peptide bond synthesis. Alleviates ribosome stalling that occurs when 3 or more consecutive Pro residues or the sequence PPG is present in a protein, possibly by augmenting the peptidyl transferase activity of the ribosome. Modification of Lys-34 is required for alleviation. This Marinomonas sp. (strain MWYL1) protein is Elongation factor P.